The primary structure comprises 196 residues: MDRVKEFAMKDQIRAHRMAGRIRHLISRQIETKLRDQLGLVTITEVQVTGDLHHAKVFVTVYGTKDEAQTALKILEDNRANFRRSLGVLKVRFVPTVEFELDRLFEDAGIMDELIQRARESDKRIAAGASGPIDNDATALMDKVVDQEARNPDSWHTAPTSSSHTAGLCLVRASSPIACNIDSTTLCKPRTPGPGL.

It belongs to the RbfA family. In terms of assembly, monomer. Binds 30S ribosomal subunits, but not 50S ribosomal subunits or 70S ribosomes.

Its subcellular location is the cytoplasm. Its function is as follows. One of several proteins that assist in the late maturation steps of the functional core of the 30S ribosomal subunit. Associates with free 30S ribosomal subunits (but not with 30S subunits that are part of 70S ribosomes or polysomes). Required for efficient processing of 16S rRNA. May interact with the 5'-terminal helix region of 16S rRNA. This chain is Ribosome-binding factor A, found in Tropheryma whipplei (strain TW08/27) (Whipple's bacillus).